Reading from the N-terminus, the 198-residue chain is Glycerol-3-phosphate acyltransferase (198 aa).

3 consecutive transmembrane segments (helical) span residues 5–25, 114–134, and 154–176; these read AVIL…GYLI, VLIM…IAVL, and AFAL…LVAV.

It belongs to the PlsY family. As to quaternary structure, probably interacts with PlsX.

It is found in the cell membrane. The catalysed reaction is an acyl phosphate + sn-glycerol 3-phosphate = a 1-acyl-sn-glycero-3-phosphate + phosphate. It participates in lipid metabolism; phospholipid metabolism. Its function is as follows. Catalyzes the transfer of an acyl group from acyl-phosphate (acyl-PO(4)) to glycerol-3-phosphate (G3P) to form lysophosphatidic acid (LPA). This enzyme utilizes acyl-phosphate as fatty acyl donor, but not acyl-CoA or acyl-ACP. This is Glycerol-3-phosphate acyltransferase from Desulforudis audaxviator (strain MP104C).